Consider the following 232-residue polypeptide: MTRPQAILTDIEGTTSSISFVKDVLFPYARRAMPAYVREHGNHPQVRHWLNQVADEIGEDVPDDVLITTLQTWIDEDRKHTALKALQGLIWGDGYKIADFTAHMYADAALQLQAWHAAGIPLYVYSSGSVPAQKLFFAHSDAGDLSGLVSDWFDTEVGSKREAASYRRIAERIGVPASEILFLSDVIEELDAAKRTGIRTALLERREDYPTPRSADDVGSHQRVESFSQLVF.

It belongs to the HAD-like hydrolase superfamily. MasA/MtnC family. In terms of assembly, monomer. Mg(2+) is required as a cofactor.

The enzyme catalyses 5-methylsulfanyl-2,3-dioxopentyl phosphate + H2O = 1,2-dihydroxy-5-(methylsulfanyl)pent-1-en-3-one + phosphate. The protein operates within amino-acid biosynthesis; L-methionine biosynthesis via salvage pathway; L-methionine from S-methyl-5-thio-alpha-D-ribose 1-phosphate: step 3/6. Its pathway is amino-acid biosynthesis; L-methionine biosynthesis via salvage pathway; L-methionine from S-methyl-5-thio-alpha-D-ribose 1-phosphate: step 4/6. In terms of biological role, bifunctional enzyme that catalyzes the enolization of 2,3-diketo-5-methylthiopentyl-1-phosphate (DK-MTP-1-P) into the intermediate 2-hydroxy-3-keto-5-methylthiopentenyl-1-phosphate (HK-MTPenyl-1-P), which is then dephosphorylated to form the acireductone 1,2-dihydroxy-3-keto-5-methylthiopentene (DHK-MTPene). The protein is Enolase-phosphatase E1 of Xanthomonas oryzae pv. oryzae (strain KACC10331 / KXO85).